Here is a 274-residue protein sequence, read N- to C-terminus: Large ribosomal subunit protein uL2 (274 aa).

Disordered regions lie at residues 40 to 59 (SGGR…GGHK) and 223 to 274 (VAMN…RRSR). 2 stretches are compositionally biased toward basic residues: residues 49 to 59 (VTRRHQGGGHK) and 256 to 274 (YRTR…RRSR).

This sequence belongs to the universal ribosomal protein uL2 family. As to quaternary structure, part of the 50S ribosomal subunit. Forms a bridge to the 30S subunit in the 70S ribosome.

Its function is as follows. One of the primary rRNA binding proteins. Required for association of the 30S and 50S subunits to form the 70S ribosome, for tRNA binding and peptide bond formation. It has been suggested to have peptidyltransferase activity; this is somewhat controversial. Makes several contacts with the 16S rRNA in the 70S ribosome. The polypeptide is Large ribosomal subunit protein uL2 (Acidithiobacillus ferrooxidans (strain ATCC 23270 / DSM 14882 / CIP 104768 / NCIMB 8455) (Ferrobacillus ferrooxidans (strain ATCC 23270))).